The sequence spans 38 residues: Photosystem II reaction center protein Y (38 aa).

The chain crosses the membrane as a helical span at residues 4–22 (TIVVFAPIIAALAWVVFNI).

It belongs to the PsbY family. PSII is composed of 1 copy each of membrane proteins PsbA, PsbB, PsbC, PsbD, PsbE, PsbF, PsbH, PsbI, PsbJ, PsbK, PsbL, PsbM, PsbT, PsbX, PsbY, Psb30/Ycf12, peripheral proteins PsbO, CyanoQ (PsbQ), PsbU, PsbV and a large number of cofactors. It forms dimeric complexes.

It is found in the cellular thylakoid membrane. Functionally, loosely associated component of the core of photosystem II (PSII), it is not always seen in crystals. PSII is a light-driven water plastoquinone oxidoreductase, using light energy to abstract electrons from H(2)O, generating a proton gradient subsequently used for ATP formation. The chain is Photosystem II reaction center protein Y from Prochlorococcus marinus (strain MIT 9215).